The primary structure comprises 262 residues: Probable cutinase 1 (262 aa).

An N-terminal signal peptide occupies residues 1 to 19 (MAPLKSLLLGASLATLALS). Intrachain disulfides connect Cys48–Cys127 and Cys74–Cys88. Ser138 (nucleophile) is an active-site residue. An intrachain disulfide couples Cys189 to Cys196. Asp193 is a catalytic residue. The active-site Proton donor/acceptor is the His206. A disordered region spans residues 228-262 (SSSTTSSSSDAASSSSAAGTSSSGLSGLSSFFGGL).

The protein belongs to the cutinase family.

It is found in the secreted. It catalyses the reaction cutin + H2O = cutin monomers.. Catalyzes the hydrolysis of complex carboxylic polyesters found in the cell wall of plants. Degrades cutin, a macromolecule that forms the structure of the plant cuticle. In Aspergillus niger (strain ATCC MYA-4892 / CBS 513.88 / FGSC A1513), this protein is Probable cutinase 1.